The sequence spans 197 residues: Inosine triphosphate pyrophosphatase (197 aa).

10-15 (TGNANK) contacts ITP. Glu45 contributes to the Mg(2+) binding site. ITP contacts are provided by residues Lys58, 76–77 (DT), Lys93, 151–154 (FGWD), Lys175, and 180–181 (HR).

This sequence belongs to the HAM1 NTPase family. In terms of assembly, homodimer. The cofactor is Mg(2+). Mn(2+) serves as cofactor.

The protein resides in the cytoplasm. It localises to the nucleus. The enzyme catalyses ITP + H2O = IMP + diphosphate + H(+). It catalyses the reaction dITP + H2O = dIMP + diphosphate + H(+). The catalysed reaction is XTP + H2O = XMP + diphosphate + H(+). It carries out the reaction N(6)-hydroxy-dATP + H2O = N(6)-hydroxy-dAMP + diphosphate + H(+). Its function is as follows. Pyrophosphatase that hydrolyzes the non-canonical purine nucleotides inosine triphosphate (ITP), deoxyinosine triphosphate (dITP) as well as 2'-deoxy-N-6-hydroxylaminopurine triphosphate (dHAPTP) and 5-bromodeoxyuridine 5'-triphosphate (BrdUTP) to their respective monophosphate derivatives. Xanthosine 5'-triphosphate (XTP) is also a potential substrate. The enzyme does not distinguish between the deoxy- and ribose forms. Probably excludes non-canonical purines from RNA and DNA precursor pools, thus preventing their incorporation into RNA and DNA and avoiding chromosomal lesions. The protein is Inosine triphosphate pyrophosphatase of Saccharomyces cerevisiae (strain ATCC 204508 / S288c) (Baker's yeast).